The sequence spans 356 residues: Protein pelota homolog (356 aa).

It belongs to the eukaryotic release factor 1 family. Pelota subfamily. As to quaternary structure, monomer. A divalent metal cation serves as cofactor.

The protein localises to the cytoplasm. Its function is as follows. May function in recognizing stalled ribosomes, interact with stem-loop structures in stalled mRNA molecules, and effect endonucleolytic cleavage of the mRNA. May play a role in the release non-functional ribosomes and degradation of damaged mRNAs. Has endoribonuclease activity. This chain is Protein pelota homolog, found in Pyrococcus abyssi (strain GE5 / Orsay).